Reading from the N-terminus, the 248-residue chain is Cobalt transport protein CbiM (248 aa).

A signal peptide spans 1 to 29; the sequence is MKRVSVKNYLVCLLIAVCAIFVFPANASA. 6 helical membrane-spanning segments follow: residues 40–60, 72–92, 104–124, 136–156, 167–187, and 210–230; these read GWCI…FFSI, TLLA…MPSV, LGAV…ILLF, TLGA…FGVF, GLAV…ITSV, and IFGF…VVIY.

The protein belongs to the CbiM family. As to quaternary structure, forms an energy-coupling factor (ECF) transporter complex composed of an ATP-binding protein (A component, CbiO), a transmembrane protein (T component, CbiQ) and 2 possible substrate-capture proteins (S components, CbiM and CbiN) of unknown stoichimetry.

It localises to the cell membrane. The protein operates within cofactor biosynthesis; adenosylcobalamin biosynthesis. Part of the energy-coupling factor (ECF) transporter complex CbiMNOQ involved in cobalt import. In Ruminiclostridium cellulolyticum (strain ATCC 35319 / DSM 5812 / JCM 6584 / H10) (Clostridium cellulolyticum), this protein is Cobalt transport protein CbiM.